Here is an 803-residue protein sequence, read N- to C-terminus: Chromatin structure-remodeling complex subunit rsc1 (803 aa).

One can recognise a Bromo 1 domain in the interval 9–117; the sequence is ADDKKLQRVL…EFCIQQLRTF (109 aa). Polar residues predominate over residues 128–154; sequence WPNTDSPSATTSSPISRNPEYSVSPPN. Residues 128-160 form a disordered region; that stretch reads WPNTDSPSATTSSPISRNPEYSVSPPNGSKFVK. Serine 168 carries the phosphoserine modification. Residues 174-206 are disordered; it reads EEDSDVKGRSMVGRDGRYKSEDLKRRKLQPSSK. Over residues 178–197 the composition is skewed to basic and acidic residues; sequence DVKGRSMVGRDGRYKSEDLK. Positions 206–316 constitute a Bromo 2 domain; sequence KPLSSLEARA…NYLADVLRLE (111 aa). Phosphoserine is present on residues serine 331 and serine 334. Positions 351 to 469 constitute a BAH domain; it reads TLLNVGDWVL…DDTKQFSKIK (119 aa). The span at 512 to 525 shows a compositional bias: polar residues; that stretch reads GLPSPATTDSNTHM. The interval 512–616 is disordered; that stretch reads GLPSPATTDS…RTSTKSTSPI (105 aa). Over residues 526-539 the composition is skewed to low complexity; the sequence is LPSQGSLLPPSSIS. Polar residues-rich tracts occupy residues 540–553 and 605–615; these read ETKS…TPLS and IMRTSTKSTSP.

It belongs to the RSC1 family. As to quaternary structure, component of the RSC complex composed of at least arp9, arp42, rsc1, rsc4, rsc7, rsc9, rsc58, sfh1, snf21, ssr1, ssr2, ssr3 and ssr4. The complex interacts with histone and histone variant components of centromeric chromatin.

The protein resides in the nucleus. Its function is as follows. Component of the chromatin structure remodeling complex (RSC), which is involved in transcription regulation and nucleosome positioning. Controls particularly membrane and organelle development genes. This chain is Chromatin structure-remodeling complex subunit rsc1 (rsc1), found in Schizosaccharomyces pombe (strain 972 / ATCC 24843) (Fission yeast).